A 578-amino-acid chain; its full sequence is Proline--tRNA ligase (578 aa).

It belongs to the class-II aminoacyl-tRNA synthetase family. ProS type 1 subfamily. Homodimer.

Its subcellular location is the cytoplasm. The enzyme catalyses tRNA(Pro) + L-proline + ATP = L-prolyl-tRNA(Pro) + AMP + diphosphate. Catalyzes the attachment of proline to tRNA(Pro) in a two-step reaction: proline is first activated by ATP to form Pro-AMP and then transferred to the acceptor end of tRNA(Pro). As ProRS can inadvertently accommodate and process non-cognate amino acids such as alanine and cysteine, to avoid such errors it has two additional distinct editing activities against alanine. One activity is designated as 'pretransfer' editing and involves the tRNA(Pro)-independent hydrolysis of activated Ala-AMP. The other activity is designated 'posttransfer' editing and involves deacylation of mischarged Ala-tRNA(Pro). The misacylated Cys-tRNA(Pro) is not edited by ProRS. The chain is Proline--tRNA ligase from Burkholderia orbicola (strain AU 1054).